Consider the following 300-residue polypeptide: ETS homologous factor (300 aa).

A PNT domain is found at 29 to 115 (STCNVSSGFF…SNLQHLKWNG (87 aa)). The disordered stretch occupies residues 183–202 (ESPDMKKEQDPPAKCHTKKH). Positions 185–195 (PDMKKEQDPPA) are enriched in basic and acidic residues. Residues 207 to 289 (THLWEFIRDI…DGRRLVYKFG (83 aa)) constitute a DNA-binding region (ETS).

Belongs to the ETS family.

The protein localises to the nucleus. In terms of biological role, transcriptional activator that may play a role in regulating epithelial cell differentiation and proliferation. May act as a repressor for a specific subset of ETS/AP-1-responsive genes, and as a modulator of the nuclear response to mitogen-activated protein kinase signaling cascades. Binds to DNA sequences containing the consensus nucleotide core sequence GGAA. Involved in regulation of TNFRSF10B/DR5 expression through Ets-binding sequences on the TNFRSF10B/DR5 promoter. This Pan troglodytes (Chimpanzee) protein is ETS homologous factor (EHF).